We begin with the raw amino-acid sequence, 754 residues long: Protein tyrosine phosphatase domain-containing protein 1 (754 aa).

The Tyrosine-protein phosphatase domain maps to 82–253 (YSSWVTDNIL…LTPLRNIFSC (172 aa)). The active-site Phosphocysteine intermediate is cysteine 190. Serine 392 and serine 394 each carry phosphoserine. The segment covering 487 to 498 (SGAFSADVSGSH) has biased composition (polar residues). The interval 487–554 (SGAFSADVSG…PRSPLDCGSS (68 aa)) is disordered. Residue serine 547 is modified to Phosphoserine.

It belongs to the protein-tyrosine phosphatase family. Non-receptor class PTPDC1 subfamily.

May play roles in cilia formation and/or maintenance. The protein is Protein tyrosine phosphatase domain-containing protein 1 (PTPDC1) of Homo sapiens (Human).